Consider the following 348-residue polypeptide: Putative agmatine deiminase (348 aa).

Cys335 (amidino-cysteine intermediate) is an active-site residue.

The protein belongs to the agmatine deiminase family.

The catalysed reaction is agmatine + H2O = N-carbamoylputrescine + NH4(+). This chain is Putative agmatine deiminase, found in Legionella pneumophila subsp. pneumophila (strain Philadelphia 1 / ATCC 33152 / DSM 7513).